The sequence spans 321 residues: MNFISIIIPTFNEEKYITKCLENWFNQDYPKENYEILIFDGKSTDKTLDVIKELQKKHNFENIKIYTNEKRKQVYAFNEGIKNANGDFFIIFGAHAYPEQDFLKNNIETYQRIKKEEPKLAGVGGIINKISENMSAEIAKVIYSTPLSGGSSFWYAKEGFFSNTVVYGMYDTKMIKESEILFDTDFITGQDFEFNLHLIKEGFKLYTNPNIVSSYYTRSSVKKFIKQTISYGAAKGLMIRKGYFNILWLFPFGFLFMLLSIIITGLLIFIYIMAILIDTIRLLIKTREPLYIALPILLFLFHCLISYGFFKGLIKGNSTFK.

2 consecutive transmembrane segments (helical) span residues 252-272 (FGFL…FIYI) and 290-310 (LYIA…YGFF).

This sequence belongs to the glycosyltransferase 2 family.

The protein localises to the cell membrane. The catalysed reaction is an archaeal dolichyl N-acetyl-alpha-D-glucosaminyl phosphate + UDP-2,3-diacetamido-2,3-dideoxy-alpha-D-glucuronate = an archaeal dolichyl 3-O-(2,3-diacetamido-2,3-dideoxy- beta-D-glucuronosyl)-N-acetyl- alpha-D-glucosaminyl phosphate + UDP + H(+). It functions in the pathway cell surface structure biogenesis; S-layer biogenesis. Its pathway is protein modification; protein glycosylation. In terms of biological role, involved in the assembly of an N-linked disaccharide that decorates the S-layer glycoprotein and flagellins. AglC catalyzes the transfer of 2,3-diacetamido-2,3-dideoxy-alpha-D-glucuronic acid (Glc-2,3-diNAcA) from uridine 5'-diphospho 2,3-diacetamido-2,3-dideoxy-alpha-D-glucuronic acid (UDP-Glc-2,3-diNAcA) to the AglK product Dol-P-GlcNAc to yield Dol-P-GlcNAc-Glc-2,3-diNAcA. AglC is specific for the monophosphate-linked Dol-P-GlcNAc. The polypeptide is Dolichyl N-acetyl-alpha-D-glucosaminyl phosphate 3-beta-D-2,3-diacetamido-2,3-dideoxy-beta-D-glucuronosyltransferase (Methanococcus voltae).